A 402-amino-acid polypeptide reads, in one-letter code: Eukaryotic initiation factor 4A (402 aa).

A Q motif motif is present at residues 29 to 57; the sequence is ESFDDMELKEELLRGIYGFGFEKPSAIQK. Positions 60–230 constitute a Helicase ATP-binding domain; that stretch reads IVPCTTGKDV…NRFMRNPIRI (171 aa). 73 to 80 is an ATP binding site; that stretch reads AQSGTGKT. A DEAD box motif is present at residues 178–181; that stretch reads DEAD. The region spanning 241–402 is the Helicase C-terminal domain; the sequence is GIRQFYINVQ…EMPESIADLI (162 aa).

It belongs to the DEAD box helicase family. eIF4A subfamily. EIF4F is a multi-subunit complex, the composition of which varies with external and internal environmental conditions. It is composed of at least EIF4A, EIF4E and EIF4G.

The catalysed reaction is ATP + H2O = ADP + phosphate + H(+). In terms of biological role, ATP-dependent RNA helicase which is a subunit of the eIF4F complex involved in cap recognition and is required for mRNA binding to ribosome. In the current model of translation initiation, eIF4A unwinds RNA secondary structures in the 5'-UTR of mRNAs which is necessary to allow efficient binding of the small ribosomal subunit, and subsequent scanning for the initiator codon. This is Eukaryotic initiation factor 4A (inf-1) from Caenorhabditis elegans.